The sequence spans 117 residues: Large ribosomal subunit protein uL18 (117 aa).

The protein belongs to the universal ribosomal protein uL18 family. In terms of assembly, part of the 50S ribosomal subunit; part of the 5S rRNA/L5/L18/L25 subcomplex. Contacts the 5S and 23S rRNAs.

In terms of biological role, this is one of the proteins that bind and probably mediate the attachment of the 5S RNA into the large ribosomal subunit, where it forms part of the central protuberance. The chain is Large ribosomal subunit protein uL18 from Acidithiobacillus ferrooxidans (strain ATCC 23270 / DSM 14882 / CIP 104768 / NCIMB 8455) (Ferrobacillus ferrooxidans (strain ATCC 23270)).